Consider the following 379-residue polypeptide: Odorant receptor 23a (379 aa).

Topologically, residues 1 to 36 are cytoplasmic; sequence MKLSETLKIDYFRVQLNAWRICGALDLSEGRYWSWS. The chain crosses the membrane as a helical span at residues 37 to 57; the sequence is MLLCILVYLPTPMLLRGVYSF. Topologically, residues 58-64 are extracellular; it reads EDPVENN. Asparagine 64 carries N-linked (GlcNAc...) asparagine glycosylation. Residues 65–85 form a helical membrane-spanning segment; the sequence is FSLSLTVTSLSNLMKFCMYVA. The Cytoplasmic segment spans residues 86-125; the sequence is QLTKMVEVQSLIGQLDARVSGESQSERHRNMTEHLLRMSK. A helical membrane pass occupies residues 126–146; it reads LFQITYAVVFIIAAVPFVFET. Topologically, residues 147–162 are extracellular; that stretch reads ELSLPMPMWFPFDWKN. Residues 163 to 183 form a helical membrane-spanning segment; the sequence is SMVAYIGALVFQEIGYVFQIM. The Cytoplasmic portion of the chain corresponds to 184 to 253; that stretch reads QCFAADSFPP…TKSLVSYPMM (70 aa). The helical transmembrane segment at 254 to 274 threads the bilayer; it reads VQFMVIGINIAITLFVLIFYV. The Extracellular portion of the chain corresponds to 275-280; the sequence is ETLYDR. The chain crosses the membrane as a helical span at residues 281–301; it reads IYYLCFLLGITVQTYPLCYYG. Residues 302–340 are Cytoplasmic-facing; it reads TMVQESFAELHYAVFCSNWVDQSASYRGHMLILAERTKR. Residues 341–361 traverse the membrane as a helical segment; it reads MQLLLAGNLVPIHLSTYVACW. Topologically, residues 362-379 are extracellular; the sequence is KGAYSFFTLMADRDGLGS.

This sequence belongs to the insect chemoreceptor superfamily. Heteromeric odorant receptor channel (TC 1.A.69) family. Or2a subfamily. Interacts with Orco. Complexes exist early in the endomembrane system in olfactory sensory neurons (OSNs), coupling these complexes to the conserved ciliary trafficking pathway. In terms of tissue distribution, expressed in 10-40 sensory cells in the third antenna segment and in the maxillary palp.

The protein localises to the cell membrane. In terms of biological role, odorant receptor which mediates acceptance or avoidance behavior, depending on its substrates. The odorant receptor repertoire encodes a large collection of odor stimuli that vary widely in identity, intensity, and duration. May form a complex with Orco to form odorant-sensing units, providing sensitive and prolonged odorant signaling and calcium permeability. This chain is Odorant receptor 23a (Or23a), found in Drosophila melanogaster (Fruit fly).